The following is a 218-amino-acid chain: Protein-methionine-sulfoxide reductase heme-binding subunit MsrQ (218 aa).

5 helical membrane-spanning segments follow: residues 14–34 (LVHA…WQVW), 60–80 (FLLI…AVVI), 86–106 (LGLY…TLDL), 121–141 (PYIT…ITST), and 155–175 (LHTL…WLVK).

Belongs to the MsrQ family. As to quaternary structure, heterodimer of a catalytic subunit (MsrP) and a heme-binding subunit (MsrQ). FMN is required as a cofactor. Requires heme b as cofactor.

Its subcellular location is the cell inner membrane. Part of the MsrPQ system that repairs oxidized periplasmic proteins containing methionine sulfoxide residues (Met-O), using respiratory chain electrons. Thus protects these proteins from oxidative-stress damage caused by reactive species of oxygen and chlorine generated by the host defense mechanisms. MsrPQ is essential for the maintenance of envelope integrity under bleach stress, rescuing a wide series of structurally unrelated periplasmic proteins from methionine oxidation. MsrQ provides electrons for reduction to the reductase catalytic subunit MsrP, using the quinone pool of the respiratory chain. This Xanthomonas euvesicatoria pv. vesicatoria (strain 85-10) (Xanthomonas campestris pv. vesicatoria) protein is Protein-methionine-sulfoxide reductase heme-binding subunit MsrQ.